A 493-amino-acid polypeptide reads, in one-letter code: Leucine-rich repeat-containing protein 14 (493 aa).

An LRR 1; degenerate repeat occupies lysine 111–threonine 146. Residues arginine 194 to aspartate 218 form an LRR 2; degenerate repeat. One copy of the LRR 3; degenerate repeat lies at alanine 219–arginine 246. The stretch at phenylalanine 247–arginine 282 is one LRR 4; degenerate repeat. LRR repeat units lie at residues phenylalanine 283–leucine 307, glutamine 308–lysine 339, lysine 340–leucine 360, alanine 364–arginine 391, and cysteine 392–aspartate 416.

It belongs to the PRAME family. LRRC14 subfamily. Interacts with IKBKB; disrupts IKBKB-IKBKG interaction preventing I-kappa-B-kinase (IKK) core complex formation and leading to a decrease of IKBKB phosphorylation and NF-kappaB activation. Interacts with CHUK.

It localises to the cytoplasm. In terms of biological role, negatively regulates Toll-like receptor-mediated NF-kappa-B signaling by disrupting IKK core complex formation through interaction with IKBKB. This is Leucine-rich repeat-containing protein 14 from Rattus norvegicus (Rat).